Reading from the N-terminus, the 78-residue chain is Mandibular organ-inhibiting hormone 1 (78 aa).

3 disulfide bridges follow: cysteine 7–cysteine 44, cysteine 24–cysteine 40, and cysteine 27–cysteine 53.

It belongs to the arthropod CHH/MIH/GIH/VIH hormone family. As to expression, produced by the medulla terminalis X-organ in the eyestalks and transported to the sinus gland where it is stored and released.

The protein resides in the secreted. Represses the synthesis of methyl farnesoate, the precursor of insect juvenile hormone III in the mandibular organ. The protein is Mandibular organ-inhibiting hormone 1 of Cancer pagurus (Rock crab).